Consider the following 842-residue polypeptide: Leucine--tRNA ligase (842 aa).

The short motif at 62 to 72 (PYPSGDLHMGH) is the 'HIGH' region element. The disordered stretch occupies residues 390 to 414 (GDEDPAETGVATAGEGTLKNSGELD). The 'KMSKS' region signature appears at 607-611 (AMSKS). An ATP-binding site is contributed by lysine 610.

The protein belongs to the class-I aminoacyl-tRNA synthetase family.

It localises to the cytoplasm. It catalyses the reaction tRNA(Leu) + L-leucine + ATP = L-leucyl-tRNA(Leu) + AMP + diphosphate. The chain is Leucine--tRNA ligase from Paenarthrobacter aurescens (strain TC1).